Reading from the N-terminus, the 1470-residue chain is Calmodulin-regulated spectrin-associated protein 2 (1470 aa).

Residues 222–335 (WKLVPARYRK…FMAELFWWFE (114 aa)) enclose the Calponin-homology (CH) domain. Positions 374 to 397 (SSSSSDFTSRYTRPQTHSSVSGGI) are disordered. Residues 380–390 (FTSRYTRPQTH) show a composition bias toward polar residues. Ser-402 and Ser-404 each carry phosphoserine. Phosphothreonine is present on Thr-412. 5 positions are modified to phosphoserine: Ser-450, Ser-581, Ser-582, Ser-594, and Ser-656. 2 disordered regions span residues 580–622 (QSSP…EDSS) and 648–712 (ASNP…EGSE). Thr-661 carries the phosphothreonine modification. Ser-663 carries the post-translational modification Phosphoserine. Low complexity predominate over residues 663 to 682 (STKSQPGSSASSSSGVKMTS). Residues 686 to 696 (QKFRKLNHTDG) are compositionally biased toward basic and acidic residues. Positions 739–776 (LLASEMVHLRMRLEEKRRAIEAQKKKMEAAFTKQRQKM) form a coiled coil. Over residues 796 to 835 (REEAAGAEDEKVYTDRAKEKESQKMDGQRSKSLADIKESM) the composition is skewed to basic and acidic residues. The interval 796–864 (REEAAGAEDE…QWNLTSPSEE (69 aa)) is disordered. Residue Ser-845 is modified to Phosphoserine. The stretch at 870–909 (ELLEYTKSIEKLNSSLHFLQQEMQRLSLQQEMLMQMREQQ) forms a coiled coil. The segment at 905-1016 (MREQQSWVIS…IQTRSFVCFG (112 aa)) is MBD region. Phosphoserine is present on residues Ser-914 and Ser-919. Disordered stretches follow at residues 930–1059 (RQAG…PLES) and 1078–1099 (NEDQLNQPTDPPPKPVFPPTAP). A compositionally biased stretch (low complexity) spans 935 to 946 (SSAAAPFSADSP). A compositionally biased stretch (polar residues) spans 952 to 971 (SPQSSTRKSASFSVKNQRTP). Phosphothreonine is present on residues Thr-979, Thr-984, and Thr-986. Ser-990 and Ser-1001 each carry phosphoserine. Polar residues predominate over residues 1001 to 1011 (SPSQVPIQTRS). 2 stretches are compositionally biased toward basic and acidic residues: residues 1020 to 1037 (EPQKEPKPKEEIKKEPSE) and 1044 to 1056 (SCDHNPGEKEVKP). The span at 1086–1098 (TDPPPKPVFPPTA) shows a compositional bias: pro residues. Residue Ser-1129 is modified to Phosphoserine. Residues 1147–1219 (KDDQKAENDM…REFIRQEYMR (73 aa)) adopt a coiled-coil conformation. Residues 1167 to 1233 (RLRREKETQL…KLMEDMDTVI (67 aa)) show a composition bias toward basic and acidic residues. The segment at 1167–1327 (RLRREKETQL…TTSSVASGTE (161 aa)) is disordered. The span at 1268 to 1280 (SSLSLASLNTGDT) shows a compositional bias: polar residues. 3 positions are modified to phosphoserine: Ser-1294, Ser-1300, and Ser-1302. The segment covering 1315–1327 (NASTTSSVASGTE) has biased composition (polar residues). Residues 1330–1464 (GPKLYKEPSA…QTKRPVTPKK (135 aa)) enclose the CKK domain.

Belongs to the CAMSAP1 family. Interacts with CAMSAP3. Interacts with KATNA1 and KATNB1; leading to regulate the length of CAMSAP2-decorated microtubule stretches. Interacts with a complex formed by AKAP9 and PDE4DIP; this interaction, which is PDE4DIP isoform-specific, recruits CAMSAP2 to the Golgi. Interacts with MAPRE1/EB1. As to expression, present in the soma, axon, and dendritic shaft of hippocampal neurons (at protein level).

The protein localises to the cytoplasm. The protein resides in the cytoskeleton. It localises to the golgi apparatus. It is found in the cilium basal body. Functionally, key microtubule-organizing protein that specifically binds the minus-end of non-centrosomal microtubules and regulates their dynamics and organization. Specifically recognizes growing microtubule minus-ends and autonomously decorates and stabilizes microtubule lattice formed by microtubule minus-end polymerization. Acts on free microtubule minus-ends that are not capped by microtubule-nucleating proteins or other factors and protects microtubule minus-ends from depolymerization. In addition, it also reduces the velocity of microtubule polymerization. Through the microtubule cytoskeleton, also regulates the organization of cellular organelles including the Golgi and the early endosomes. Essential for the tethering, but not for nucleation of non-centrosomal microtubules at the Golgi: together with Golgi-associated proteins AKAP9 and PDE4DIP, required to tether non-centrosomal minus-end microtubules to the Golgi, an important step for polarized cell movement. Also acts as a regulator of neuronal polarity and development: localizes to non-centrosomal microtubule minus-ends in neurons and stabilizes non-centrosomal microtubules, which is required for neuronal polarity, axon specification and dendritic branch formation. Through the microtubule cytoskeleton, regulates the autophagosome transport. This chain is Calmodulin-regulated spectrin-associated protein 2, found in Rattus norvegicus (Rat).